A 362-amino-acid chain; its full sequence is NAD(P)H-quinone oxidoreductase subunit 1, chloroplastic (362 aa).

Helical transmembrane passes span isoleucine 27–valine 47, isoleucine 103–leucine 123, isoleucine 128–glycine 148, alanine 164–leucine 184, phenylalanine 202–leucine 222, tyrosine 247–serine 267, valine 303–isoleucine 323, and phenylalanine 342–leucine 362.

Belongs to the complex I subunit 1 family. NDH is composed of at least 16 different subunits, 5 of which are encoded in the nucleus.

It localises to the plastid. It is found in the chloroplast thylakoid membrane. It catalyses the reaction a plastoquinone + NADH + (n+1) H(+)(in) = a plastoquinol + NAD(+) + n H(+)(out). The catalysed reaction is a plastoquinone + NADPH + (n+1) H(+)(in) = a plastoquinol + NADP(+) + n H(+)(out). Its function is as follows. NDH shuttles electrons from NAD(P)H:plastoquinone, via FMN and iron-sulfur (Fe-S) centers, to quinones in the photosynthetic chain and possibly in a chloroplast respiratory chain. The immediate electron acceptor for the enzyme in this species is believed to be plastoquinone. Couples the redox reaction to proton translocation, and thus conserves the redox energy in a proton gradient. This Saccharum hybrid (Sugarcane) protein is NAD(P)H-quinone oxidoreductase subunit 1, chloroplastic.